Here is a 395-residue protein sequence, read N- to C-terminus: NAD(P)H-quinone oxidoreductase subunit H, chloroplastic (395 aa).

This sequence belongs to the complex I 49 kDa subunit family. As to quaternary structure, NDH is composed of at least 16 different subunits, 5 of which are encoded in the nucleus.

The protein resides in the plastid. Its subcellular location is the chloroplast thylakoid membrane. The catalysed reaction is a plastoquinone + NADH + (n+1) H(+)(in) = a plastoquinol + NAD(+) + n H(+)(out). It catalyses the reaction a plastoquinone + NADPH + (n+1) H(+)(in) = a plastoquinol + NADP(+) + n H(+)(out). Functionally, NDH shuttles electrons from NAD(P)H:plastoquinone, via FMN and iron-sulfur (Fe-S) centers, to quinones in the photosynthetic chain and possibly in a chloroplast respiratory chain. The immediate electron acceptor for the enzyme in this species is believed to be plastoquinone. Couples the redox reaction to proton translocation, and thus conserves the redox energy in a proton gradient. In Coffea arabica (Arabian coffee), this protein is NAD(P)H-quinone oxidoreductase subunit H, chloroplastic.